Consider the following 484-residue polypeptide: Aldehyde dehydrogenase family 3 member F1 (484 aa).

NAD(+) is bound at residue 192–197 (GSPKIG). Glu-214 (proton acceptor) is an active-site residue. The active-site Nucleophile is the Cys-252.

Belongs to the aldehyde dehydrogenase family. As to quaternary structure, homotetramer. In terms of tissue distribution, constituively expressed at low levels.

It catalyses the reaction an aldehyde + NAD(+) + H2O = a carboxylate + NADH + 2 H(+). The protein is Aldehyde dehydrogenase family 3 member F1 (ALDH3F1) of Arabidopsis thaliana (Mouse-ear cress).